We begin with the raw amino-acid sequence, 332 residues long: Phosphate acyltransferase (332 aa).

Belongs to the PlsX family. As to quaternary structure, homodimer. Probably interacts with PlsY.

Its subcellular location is the cytoplasm. The enzyme catalyses a fatty acyl-[ACP] + phosphate = an acyl phosphate + holo-[ACP]. It functions in the pathway lipid metabolism; phospholipid metabolism. Catalyzes the reversible formation of acyl-phosphate (acyl-PO(4)) from acyl-[acyl-carrier-protein] (acyl-ACP). This enzyme utilizes acyl-ACP as fatty acyl donor, but not acyl-CoA. The sequence is that of Phosphate acyltransferase from Sulfurimonas denitrificans (strain ATCC 33889 / DSM 1251) (Thiomicrospira denitrificans (strain ATCC 33889 / DSM 1251)).